The chain runs to 425 residues: Adenylosuccinate synthetase (425 aa).

GTP-binding positions include 12 to 18 (GDEGKGK) and 40 to 42 (GHT). D13 acts as the Proton acceptor in catalysis. D13 and G40 together coordinate Mg(2+). IMP contacts are provided by residues 13–16 (DEGK), 38–41 (NAGH), T130, R144, Q224, T239, and R301. The Proton donor role is filled by H41. Substrate is bound at residue 297 to 303 (TVSNRRR). GTP is bound by residues R303, 329-331 (KLD), and 411-413 (STS).

This sequence belongs to the adenylosuccinate synthetase family. As to quaternary structure, homodimer. The cofactor is Mg(2+).

It localises to the cytoplasm. The catalysed reaction is IMP + L-aspartate + GTP = N(6)-(1,2-dicarboxyethyl)-AMP + GDP + phosphate + 2 H(+). It functions in the pathway purine metabolism; AMP biosynthesis via de novo pathway; AMP from IMP: step 1/2. Its function is as follows. Plays an important role in the de novo pathway of purine nucleotide biosynthesis. Catalyzes the first committed step in the biosynthesis of AMP from IMP. The chain is Adenylosuccinate synthetase from Wolbachia sp. subsp. Drosophila simulans (strain wRi).